Here is a 289-residue protein sequence, read N- to C-terminus: Rhodopsin (289 aa).

Residues 1 to 7 lie on the Extracellular side of the membrane; it reads YLVSPAA. The helical transmembrane segment at 8 to 32 threads the bilayer; the sequence is YAALGAYMFLLILVGFPVNFLTLYV. The Cytoplasmic portion of the chain corresponds to 33-44; the sequence is TLDHKKLRTPLN. Residues 45-67 form a helical membrane-spanning segment; the sequence is YILLNLAVADLFMVLGGFTTTMY. Residues 68–81 are Extracellular-facing; it reads TSMHGYFVLGRLGC. Cysteines 81 and 158 form a disulfide. The chain crosses the membrane as a helical span at residues 82–104; that stretch reads NLEGFFATLGGEIALWSLVVLAI. Residues 105–107 carry the 'Ionic lock' involved in activated form stabilization motif; the sequence is ERW. At 105-123 the chain is on the cytoplasmic side; it reads ERWIVVCKPISNFRFTEDH. Residues 124 to 144 traverse the membrane as a helical segment; that stretch reads AIMGLAFSWVMALTCAVPPLV. Residues 145 to 173 lie on the Extracellular side of the membrane; the sequence is GWSRYIPEGMQCSCGVDYYTRAEGFNTES. The helical transmembrane segment at 174–195 threads the bilayer; it reads FVLYMFTVHFLIPLSVIFFCYG. Residues 196–223 are Cytoplasmic-facing; it reads RLLCAVKEAAAAQQESETTQRAEKEVSR. A helical membrane pass occupies residues 224–245; the sequence is MVVLMVIGFLVCWLPYASVAWW. Residues 246-257 are Extracellular-facing; it reads IFCNQGSEFGPI. The helical transmembrane segment at 258–279 threads the bilayer; that stretch reads FMTLPAFFAKTSAIYNPLIYIC. An N6-(retinylidene)lysine modification is found at K267. Over 280–289 the chain is Cytoplasmic; sequence MNKQFRHCMI.

It belongs to the G-protein coupled receptor 1 family. Opsin subfamily. Phosphorylated on some or all of the serine and threonine residues present in the C-terminal region. In terms of processing, contains one covalently linked retinal chromophore.

Its subcellular location is the membrane. It localises to the cell projection. The protein localises to the cilium. It is found in the photoreceptor outer segment. Photoreceptor required for image-forming vision at low light intensity. While most salt water fish species use retinal as chromophore, most freshwater fish use 3-dehydroretinal, or a mixture of retinal and 3-dehydroretinal. Light-induced isomerization of 11-cis to all-trans retinal triggers a conformational change that activates signaling via G-proteins. Subsequent receptor phosphorylation mediates displacement of the bound G-protein alpha subunit by arrestin and terminates signaling. This chain is Rhodopsin (rho), found in Procottus jeittelesii (Red sculpin).